The following is a 684-amino-acid chain: Zinc finger BED domain-containing protein RICESLEEPER 4 (684 aa).

The BED-type zinc-finger motif lies at 54–113 (KRKSAIWEHFTLVDVSDGCKRASCIHCNQSLAYSSGSKNSGTSHLTRHIAEWCRVLKDRQ). The Zn(2+) site is built by cysteine 77, cysteine 80, histidine 101, and cysteine 106. The segment at 595–680 (ELELYLEEAL…EALLCAKDWL (86 aa)) is HATC (Hobo-Ac-Tam3) domain.

In terms of assembly, homodimer.

It is found in the nucleus. Its function is as follows. Transposase-like protein that is essential for plant growth and development. May regulate global gene expression by recruiting other cellular factors. The polypeptide is Zinc finger BED domain-containing protein RICESLEEPER 4 (Oryza sativa subsp. japonica (Rice)).